Reading from the N-terminus, the 245-residue chain is UPF0246 protein cgR_1824 (245 aa).

This sequence belongs to the UPF0246 family.

The polypeptide is UPF0246 protein cgR_1824 (Corynebacterium glutamicum (strain R)).